The sequence spans 319 residues: MSSDDAIIIRCPFDCEFAGDSISFISHLTTIHNSSVQTLAKNAYLCASEIANELNQNPNLKDQEILLLQIAQENSLKRVLRQQQKERREGKIKSLQCLFCNNEGLLNRQEWFEHSFHVHGLNIGLADNIVYINRLLEKIKNELESFRCLCCHVPCKNKKLLREHMNNKRHFRLDPKSSEYDEFYIINYASVTKSITISHSQFAINEDINETDDTISDINDEDAEPLSVECIFCTNFYEPVFCFEHCKIVHDWDIKKIQKDYSLDVYGAIRVINYSRKTKKKSIPAETDSFWKEPGWLIPVVPDDALIICLSEVIEDPRL.

Residues 146-170 form a C2H2-type zinc finger; that stretch reads FRCLCCHVPCKNKKLLREHMNNKRH.

Belongs to the ZNF277 family.

It is found in the nucleus. The sequence is that of Zinc finger protein C19B12.07c from Schizosaccharomyces pombe (strain 972 / ATCC 24843) (Fission yeast).